The chain runs to 363 residues: Spermidine/putrescine import ATP-binding protein PotA (363 aa).

The ABC transporter domain maps to 9-239 (IDVRNAVKRY…PANRFVADFI (231 aa)). 41 to 48 (GPSGCGKT) is an ATP binding site.

Belongs to the ABC transporter superfamily. Spermidine/putrescine importer (TC 3.A.1.11.1) family. The complex is composed of two ATP-binding proteins (PotA), two transmembrane proteins (PotB and PotC) and a solute-binding protein (PotD).

It is found in the cell inner membrane. The enzyme catalyses ATP + H2O + polyamine-[polyamine-binding protein]Side 1 = ADP + phosphate + polyamineSide 2 + [polyamine-binding protein]Side 1.. Its function is as follows. Part of the ABC transporter complex PotABCD involved in spermidine/putrescine import. Responsible for energy coupling to the transport system. The polypeptide is Spermidine/putrescine import ATP-binding protein PotA (Roseobacter denitrificans (strain ATCC 33942 / OCh 114) (Erythrobacter sp. (strain OCh 114))).